Consider the following 67-residue polypeptide: ATP synthase F(0) complex subunit 8 (67 aa).

The helical transmembrane segment at 8-24 threads the bilayer; that stretch reads TWLIMILSMILTLFITF. Position 54 is an N6-acetyllysine; alternate (Lys54). Residue Lys54 is modified to N6-succinyllysine; alternate. An N6-acetyllysine modification is found at Lys57.

Belongs to the ATPase protein 8 family. As to quaternary structure, component of the ATP synthase complex composed at least of ATP5F1A/subunit alpha, ATP5F1B/subunit beta, ATP5MC1/subunit c (homooctomer), MT-ATP6/subunit a, MT-ATP8/subunit 8, ATP5ME/subunit e, ATP5MF/subunit f, ATP5MG/subunit g, ATP5MK/subunit k, ATP5MJ/subunit j, ATP5F1C/subunit gamma, ATP5F1D/subunit delta, ATP5F1E/subunit epsilon, ATP5PF/subunit F6, ATP5PB/subunit b, ATP5PD/subunit d, ATP5PO/subunit OSCP. ATP synthase complex consists of a soluble F(1) head domain (subunits alpha(3) and beta(3)) - the catalytic core - and a membrane F(0) domain - the membrane proton channel (subunits c, a, 8, e, f, g, k and j). These two domains are linked by a central stalk (subunits gamma, delta, and epsilon) rotating inside the F1 region and a stationary peripheral stalk (subunits F6, b, d, and OSCP). Interacts with PRICKLE3.

It is found in the mitochondrion membrane. Subunit 8, of the mitochondrial membrane ATP synthase complex (F(1)F(0) ATP synthase or Complex V) that produces ATP from ADP in the presence of a proton gradient across the membrane which is generated by electron transport complexes of the respiratory chain. ATP synthase complex consist of a soluble F(1) head domain - the catalytic core - and a membrane F(1) domain - the membrane proton channel. These two domains are linked by a central stalk rotating inside the F(1) region and a stationary peripheral stalk. During catalysis, ATP synthesis in the catalytic domain of F(1) is coupled via a rotary mechanism of the central stalk subunits to proton translocation. In vivo, can only synthesize ATP although its ATP hydrolase activity can be activated artificially in vitro. Part of the complex F(0) domain. The protein is ATP synthase F(0) complex subunit 8 of Phoca vitulina (Harbor seal).